An 816-amino-acid chain; its full sequence is Neuronal PAS domain-containing protein 2 (816 aa).

Residues M1–K10 show a composition bias toward basic and acidic residues. The segment at M1–R21 is disordered. The sufficient for heterodimer formation with BMAL1, E-box binding and for the effect of NADPH stretch occupies residues M1 to E61. Residues A9 to H59 form the bHLH domain. The region spanning N82 to T152 is the PAS 1 domain. H119 and H171 together coordinate heme b. A PAS 2 domain is found at F237–G307. The 44-residue stretch at S311–A354 folds into the PAC domain. Disordered regions lie at residues L364 to T431, I610 to S639, Q685 to R705, and P742 to S816. A compositionally biased stretch (low complexity) spans S400 to R413. Residues H420 to T431 are compositionally biased toward polar residues. A compositionally biased stretch (low complexity) spans L623–S639. Residues P745–Q759 show a composition bias toward low complexity. Polar residues predominate over residues L780–G789. The span at P806–S816 shows a compositional bias: basic residues.

In terms of assembly, component of the circadian clock oscillator which includes the CRY proteins, CLOCK or NPAS2, BMAL1 or BMAL2, CSNK1D and/or CSNK1E, TIMELESS and the PER proteins. Efficient DNA binding requires dimerization with another bHLH protein. Interacts with NCOA3, KAT2B and CREBBP. Forms a heterodimer with BMAL1 and this heterodimerization is required for E-box-dependent transactivation. Interacts with EP300. Heme serves as cofactor. In terms of tissue distribution, expressed in the retinal ganglion cells (at protein level). Expressed in the hypothalamic suprachiasmatic nuclei (SCN) of the brain. Also found in spinal cord, and to a lesser extent in colon, small intestine and uterus. Exhibits a diurnal variation in its expression in the brain.

Its subcellular location is the nucleus. With respect to regulation, carbon monoxide (CO) and the redox state of the cell can modulate the transcriptional activity of the NPAS2-BMAL1 heterodimer. NADH and NADPH enhance the DNA-binding activity of the heterodimer whereas CO binds the heme group in NPAS2 and inhibits the DNA-binding activity of the heterodimer. In terms of biological role, transcriptional activator which forms a core component of the circadian clock. The circadian clock, an internal time-keeping system, regulates various physiological processes through the generation of approximately 24 hour circadian rhythms in gene expression, which are translated into rhythms in metabolism and behavior. It is derived from the Latin roots 'circa' (about) and 'diem' (day) and acts as an important regulator of a wide array of physiological functions including metabolism, sleep, body temperature, blood pressure, endocrine, immune, cardiovascular, and renal function. Consists of two major components: the central clock, residing in the suprachiasmatic nucleus (SCN) of the brain, and the peripheral clocks that are present in nearly every tissue and organ system. Both the central and peripheral clocks can be reset by environmental cues, also known as Zeitgebers (German for 'timegivers'). The predominant Zeitgeber for the central clock is light, which is sensed by retina and signals directly to the SCN. The central clock entrains the peripheral clocks through neuronal and hormonal signals, body temperature and feeding-related cues, aligning all clocks with the external light/dark cycle. Circadian rhythms allow an organism to achieve temporal homeostasis with its environment at the molecular level by regulating gene expression to create a peak of protein expression once every 24 hours to control when a particular physiological process is most active with respect to the solar day. Transcription and translation of core clock components (CLOCK, NPAS2, BMAL1, BMAL2, PER1, PER2, PER3, CRY1 and CRY2) plays a critical role in rhythm generation, whereas delays imposed by post-translational modifications (PTMs) are important for determining the period (tau) of the rhythms (tau refers to the period of a rhythm and is the length, in time, of one complete cycle). A diurnal rhythm is synchronized with the day/night cycle, while the ultradian and infradian rhythms have a period shorter and longer than 24 hours, respectively. Disruptions in the circadian rhythms contribute to the pathology of cardiovascular diseases, cancer, metabolic syndromes and aging. A transcription/translation feedback loop (TTFL) forms the core of the molecular circadian clock mechanism. Transcription factors, CLOCK or NPAS2 and BMAL1 or BMAL2, form the positive limb of the feedback loop, act in the form of a heterodimer and activate the transcription of core clock genes and clock-controlled genes (involved in key metabolic processes), harboring E-box elements (5'-CACGTG-3') within their promoters. The core clock genes: PER1/2/3 and CRY1/2 which are transcriptional repressors form the negative limb of the feedback loop and interact with the CLOCK|NPAS2-BMAL1|BMAL2 heterodimer inhibiting its activity and thereby negatively regulating their own expression. This heterodimer also activates nuclear receptors NR1D1/2 and RORA/B/G, which form a second feedback loop and which activate and repress BMAL1 transcription, respectively. The NPAS2-BMAL1 heterodimer positively regulates the expression of MAOA, F7 and LDHA and modulates the circadian rhythm of daytime contrast sensitivity by regulating the rhythmic expression of adenylate cyclase type 1 (ADCY1) in the retina. NPAS2 plays an important role in sleep homeostasis and in maintaining circadian behaviors in normal light/dark and feeding conditions and in the effective synchronization of feeding behavior with scheduled food availability. Regulates the gene transcription of key metabolic pathways in the liver and is involved in DNA damage response by regulating several cell cycle and DNA repair genes. Controls the circadian rhythm of NR0B2 expression by binding rhythmically to its promoter. Mediates the diurnal variation in the expression of GABARA1 receptor in the brain and contributes to the regulation of anxiety-like behaviors and GABAergic neurotransmission in the ventral striatum. The chain is Neuronal PAS domain-containing protein 2 (Npas2) from Mus musculus (Mouse).